Reading from the N-terminus, the 34-residue chain is Photosystem II reaction center protein M (34 aa).

Residues 7–27 (GFVATLLFVLVPAIFLIILYI) form a helical membrane-spanning segment.

This sequence belongs to the PsbM family. PSII is composed of 1 copy each of membrane proteins PsbA, PsbB, PsbC, PsbD, PsbE, PsbF, PsbH, PsbI, PsbJ, PsbK, PsbL, PsbM, PsbT, PsbX, PsbY, PsbZ, Psb30/Ycf12, peripheral proteins PsbO, CyanoQ (PsbQ), PsbU, PsbV and a large number of cofactors. It forms dimeric complexes.

It is found in the cellular thylakoid membrane. One of the components of the core complex of photosystem II (PSII). PSII is a light-driven water:plastoquinone oxidoreductase that uses light energy to abstract electrons from H(2)O, generating O(2) and a proton gradient subsequently used for ATP formation. It consists of a core antenna complex that captures photons, and an electron transfer chain that converts photonic excitation into a charge separation. This subunit is found at the monomer-monomer interface. This chain is Photosystem II reaction center protein M, found in Synechococcus sp. (strain RCC307).